Reading from the N-terminus, the 824-residue chain is LPS-assembly protein LptD (824 aa).

2 disordered regions span residues 1–26 (MTEQRRSPHHPATRPPAPPGTSRRVR) and 67–117 (TQTP…PAYV). The signal sequence occupies residues 1-48 (MTEQRRSPHHPATRPPAPPGTSRRVRLPASALRPLVLAMAGLTVSAHA). A compositionally biased stretch (low complexity) spans 98-115 (NTLNLSPSSTPSNPNAPA).

Belongs to the LptD family. Component of the lipopolysaccharide transport and assembly complex. Interacts with LptE and LptA.

The protein resides in the cell outer membrane. Together with LptE, is involved in the assembly of lipopolysaccharide (LPS) at the surface of the outer membrane. This is LPS-assembly protein LptD from Cupriavidus metallidurans (strain ATCC 43123 / DSM 2839 / NBRC 102507 / CH34) (Ralstonia metallidurans).